Here is a 242-residue protein sequence, read N- to C-terminus: ATP synthase subunit a (242 aa).

The next 5 helical transmembrane spans lie at 21–41 (LSSIMMLIITAVIVFVIAIIC), 79–99 (FHFLAVTLIFFIFVSNMLGLP), 116–136 (DATVTLTLSTLIILLTHFYGV), 173–193 (LYGNIFAGELLLGLLAGLVTG), and 198–218 (AWGWIIGLPGLVVWQGFSIFI).

This sequence belongs to the ATPase A chain family. In terms of assembly, F-type ATPases have 2 components, CF(1) - the catalytic core - and CF(0) - the membrane proton channel. CF(1) has five subunits: alpha(3), beta(3), gamma(1), delta(1), epsilon(1). CF(0) has three main subunits: a(1), b(2) and c(9-12). The alpha and beta chains form an alternating ring which encloses part of the gamma chain. CF(1) is attached to CF(0) by a central stalk formed by the gamma and epsilon chains, while a peripheral stalk is formed by the delta and b chains.

The protein localises to the cell membrane. Key component of the proton channel; it plays a direct role in the translocation of protons across the membrane. The protein is ATP synthase subunit a of Staphylococcus saprophyticus subsp. saprophyticus (strain ATCC 15305 / DSM 20229 / NCIMB 8711 / NCTC 7292 / S-41).